The sequence spans 450 residues: MTAHKPFSAVILAAGKGTRMRSDTHKILHALAGRPLLGWVLDSLAPLSPDHTVVVTGSGREQVENYLKQVDLPVTSVTQEEQLGTAHAVAQAKSALKDFKGDIVVLYGDVPLVQPKTIKALLERLHHEDKPTVAVLAFRPDDPRQYGRIVTDKTAHIQKMVEYKDASEEERAITLCNSGLLAIRAHDLWPLLSRVQNNNASGEYYLPDIVMLALSEGRQAVTVDAEAWEVSGVNNRAELASLESLWQNRKRQDVMKDGASLIAPETVWFSYDTEIGRDVIIEPQVYFGRNVKVANGVTIHSFSHIEGADIKENVEIGPFARLRPGAEIAEKAKIGNFVEIKKSKIEKGAKVNHLTYIGDATIGAGSNIGGGTITCNYDGFNKSRTEIGEKAFIGSNSALVAPVRIGAGAIIAAGSTITHNVPDDSLAIARSEQENKALWAKKFRQRKKKK.

Residues M1–R236 are pyrophosphorylase. UDP-N-acetyl-alpha-D-glucosamine-binding positions include L12–G15, K26, Q79, G84–T85, Y107–D109, G147, E162, N177, and N234. Mg(2+) is bound at residue D109. Mg(2+) is bound at residue N234. Positions A237–D257 are linker. The interval G258–K450 is N-acetyltransferase. R323 and K341 together coordinate UDP-N-acetyl-alpha-D-glucosamine. H353 serves as the catalytic Proton acceptor. UDP-N-acetyl-alpha-D-glucosamine is bound by residues Y356 and N367. Acetyl-CoA is bound by residues N376 to Y377, S395, A413, and R430.

The protein in the N-terminal section; belongs to the N-acetylglucosamine-1-phosphate uridyltransferase family. It in the C-terminal section; belongs to the transferase hexapeptide repeat family. As to quaternary structure, homotrimer. The cofactor is Mg(2+).

The protein resides in the cytoplasm. It catalyses the reaction alpha-D-glucosamine 1-phosphate + acetyl-CoA = N-acetyl-alpha-D-glucosamine 1-phosphate + CoA + H(+). The catalysed reaction is N-acetyl-alpha-D-glucosamine 1-phosphate + UTP + H(+) = UDP-N-acetyl-alpha-D-glucosamine + diphosphate. It participates in nucleotide-sugar biosynthesis; UDP-N-acetyl-alpha-D-glucosamine biosynthesis; N-acetyl-alpha-D-glucosamine 1-phosphate from alpha-D-glucosamine 6-phosphate (route II): step 2/2. Its pathway is nucleotide-sugar biosynthesis; UDP-N-acetyl-alpha-D-glucosamine biosynthesis; UDP-N-acetyl-alpha-D-glucosamine from N-acetyl-alpha-D-glucosamine 1-phosphate: step 1/1. It functions in the pathway bacterial outer membrane biogenesis; LPS lipid A biosynthesis. In terms of biological role, catalyzes the last two sequential reactions in the de novo biosynthetic pathway for UDP-N-acetylglucosamine (UDP-GlcNAc). The C-terminal domain catalyzes the transfer of acetyl group from acetyl coenzyme A to glucosamine-1-phosphate (GlcN-1-P) to produce N-acetylglucosamine-1-phosphate (GlcNAc-1-P), which is converted into UDP-GlcNAc by the transfer of uridine 5-monophosphate (from uridine 5-triphosphate), a reaction catalyzed by the N-terminal domain. This is Bifunctional protein GlmU from Zymomonas mobilis subsp. mobilis (strain ATCC 31821 / ZM4 / CP4).